We begin with the raw amino-acid sequence, 201 residues long: Ribonuclease HII (201 aa).

In terms of domain architecture, RNase H type-2 spans 10 to 200; that stretch reads LIEAGCDEAG…LGDGQLELFS (191 aa). Residues Asp16, Glu17, and Asp108 each contribute to the a divalent metal cation site.

This sequence belongs to the RNase HII family. Mn(2+) serves as cofactor. It depends on Mg(2+) as a cofactor.

The protein resides in the cytoplasm. The catalysed reaction is Endonucleolytic cleavage to 5'-phosphomonoester.. In terms of biological role, endonuclease that specifically degrades the RNA of RNA-DNA hybrids. The protein is Ribonuclease HII of Bacteroides fragilis (strain ATCC 25285 / DSM 2151 / CCUG 4856 / JCM 11019 / LMG 10263 / NCTC 9343 / Onslow / VPI 2553 / EN-2).